Here is a 983-residue protein sequence, read N- to C-terminus: Receptor-like protein 19 (983 aa).

The signal sequence occupies residues 1–25 (MMKGYITLSFLIILIFNFLDEFAAS). Residues 26–937 (TRHLCDPDQS…EEDEEEVISW (912 aa)) lie on the Extracellular side of the membrane. N-linked (GlcNAc...) asparagine glycosylation is found at N66 and N102. LRR repeat units lie at residues 82–108 (FGDVIELDLSFSCLRGQLNSNSSLFRL), 111–135 (LRFLTTLDLSNNDFIGQIPSSLETL), 136–159 (SNLTTLDLSRNHFSGRIPSSIGNL), 161–183 (HLIFVDFSHNNFSGQIPSSLGYL), 184–207 (SHLTSFNLSYNNFSGRVPSSIGNL), 209–231 (YLTTLRLSRNSFFGELPSSLGSL), 232–255 (FHLTDLILDTNHFVGKIPSSLGNL), 256–281 (SHLTSIDLHKNNFVGEIPFSLGNLSC), 283–302 (TSFILSDNNIVGEIPSSFGN), 303–327 (LNQLDILNVKSNKLSGSFPIALLNL), 328–351 (RKLSTLSLFNNRLTGTLPSNMSSL), 353–375 (NLKLFDATENHFTGPLPSSLFNI), 376–399 (PSLKTITLENNQLNGSLGFGNISS), 401–424 (SNLTVLRLGNNNFRGPIHRSISKL), 425–448 (VNLKELDLSNYNTQGLVDFTIFSH), 450–474 (KSIEYLNLSHLNTTTTIDMYEILSS), 475–498 (FKLLDTLDLSGSHVSTTNKSSLSN), 501–524 (LVLISQLYLSGCGITEFPKFLRSQ), 525–548 (ELMLTLDISNNKIKGQVPGWLWML), 550–571 (VLNYVNLSNNTFIGFERSTKLG), 578–602 (PPAMRQLFCSNNNFTGNIPSFICEL), 603–628 (PYLSTLDFSNNKFNGSIPTCMGNIQS), 629–652 (PYLQALNLRHNRLSGLLPENIFES), 654–674 (ISLDVGHNQLVGKLPRSLSHI), 675–700 (SSLGLLNVESNKISDTFPLWLSSLQE), 702–720 (QVLVLRSNAFYGPIEKTQF), 721–744 (SKLRIIDISGNQFNGTLPANFFVN), 793–817 (LKVFTVIDFSGNKFEGEIPKSIGLL), 818–840 (KELHVLNLSNNALSGHIASSMGN), 841–865 (LMALESLDVSQNKLSGEIPQELGKL), and 867–890 (YLAYMNFSHNQLVGLLPGGTQFQT). N-linked (GlcNAc...) asparagine glycans are attached at residues N137, N158, N171, N190, N195, and N206. Residues N254 and N278 are each glycosylated (N-linked (GlcNAc...) asparagine). Residue N347 is glycosylated (N-linked (GlcNAc...) asparagine). N-linked (GlcNAc...) asparagine glycans are attached at residues N389, N396, and N402. N456, N461, N492, and N498 each carry an N-linked (GlcNAc...) asparagine glycan. N-linked (GlcNAc...) asparagine glycans are attached at residues N555, N558, N590, and N616. Residues N734 and N744 are each glycosylated (N-linked (GlcNAc...) asparagine). A glycan (N-linked (GlcNAc...) asparagine) is linked at N824. Residue N872 is glycosylated (N-linked (GlcNAc...) asparagine). The chain crosses the membrane as a helical span at residues 938-958 (IAAVIGFILGTALGLTFGCIL). Residues 959–983 (FSYKPDWFKNPFVRDKRRNIGTITH) are Cytoplasmic-facing.

It belongs to the RLP family.

The protein resides in the cell membrane. The sequence is that of Receptor-like protein 19 from Arabidopsis thaliana (Mouse-ear cress).